Reading from the N-terminus, the 1073-residue chain is Semaphorin-6D (1073 aa).

The first 20 residues, 1-20, serve as a signal peptide directing secretion; sequence MRVFLLCAYILLLMVSQLRA. Topologically, residues 21-662 are extracellular; that stretch reads VSFPEDDEPL…GESNQMVHMN (642 aa). The Sema domain occupies 27 to 512; it reads DEPLNTVDYH…FSSCIIRIPL (486 aa). N-linked (GlcNAc...) asparagine glycosylation is present at N51. 4 disulfides stabilise this stretch: C108–C118, C136–C145, C259–C370, and C284–C329. N-linked (GlcNAc...) asparagine glycosylation is present at N283. N435 and N461 each carry an N-linked (GlcNAc...) asparagine glycan. 4 disulfides stabilise this stretch: C477–C506, C515–C533, C521–C568, and C525–C541. One can recognise a PSI domain in the interval 514-569; that stretch reads RCERYGSCKKSCIASRDPYCGWLSQGSCGRVTPGMLAEGYEQDTEFGNTAHLGDCH. N631 is a glycosylation site (N-linked (GlcNAc...) asparagine). The helical transmembrane segment at 663-683 threads the bilayer; sequence VLITCVFAAFVLGAFIAGVAV. At 684 to 1073 the chain is on the cytoplasmic side; sequence YCYRDMFVRK…SVRPLNKYTY (390 aa). Phosphoserine occurs at positions 723, 734, and 744. Disordered regions lie at residues 744 to 775, 787 to 825, 839 to 874, 914 to 1005, and 1021 to 1073; these read SRKELPPNGDTKSMVMDHRGQPPELAALPTPE, AMKSHSEKAHGHGASRKETPQFFPSSPPPHSPLSHGHIP, TSFSNSNAHKAEKKLQNIDHPLTKSSSKRDHRRSVD, SMSE…PTPT, and LQPS…KYTY. The residue at position 773 (T773) is a Phosphothreonine. Positions 790–805 are enriched in basic and acidic residues; that stretch reads SHSEKAHGHGASRKET. S931, S957, and S983 each carry phosphoserine. Residues 931–942 are compositionally biased toward polar residues; it reads SPPSTLPRNSPT. 2 stretches are compositionally biased toward polar residues: residues 980 to 995 and 1021 to 1037; these read NLNSPNGVLLSRQPSM and LQPSLSRQSSYTSNGTL.

Belongs to the semaphorin family.

The protein localises to the cell membrane. Its subcellular location is the cytoplasm. Its function is as follows. Shows growth cone collapsing activity on dorsal root ganglion (DRG) neurons in vitro. May be a stop signal for the DRG neurons in their target areas, and possibly also for other neurons. May also be involved in the maintenance and remodeling of neuronal connections. Ligand of TREM2 with PLXNA1 as coreceptor in dendritic cells, plays a role in the generation of immune responses and skeletal homeostasis. In Homo sapiens (Human), this protein is Semaphorin-6D.